Here is a 160-residue protein sequence, read N- to C-terminus: Type IV major fimbrial protein FimA (160 aa).

Residues Met1–Gly7 constitute a propeptide, leader sequence. Position 8 is an N-methylphenylalanine (Phe8). A helical transmembrane segment spans residues Phe8 to Ile28. Cys63 and Cys105 are oxidised to a cystine.

The protein belongs to the N-Me-Phe pilin family. As to quaternary structure, the pili are polar flexible filaments of about 5.4 nanometers diameter and 2.5 micrometers average length; they consist of only a single polypeptide chain arranged in a helical configuration of five subunits per turn in the assembled pilus.

It localises to the fimbrium. Its subcellular location is the membrane. Functionally, major component of the type IV fimbriae that plays an essential role in twitching motility, natural transformation, and protease secretion. This chain is Type IV major fimbrial protein FimA (fimA), found in Dichelobacter nodosus (Bacteroides nodosus).